The sequence spans 145 residues: Large ribosomal subunit protein uL15 (145 aa).

Positions 1–54 (MKLNELKYTPGSKKEATRVGRGMASGKGKTATRGHKGQNSRSGGGVRPGFEGGQ) are disordered. The span at 42-52 (SGGGVRPGFEG) shows a compositional bias: gly residues.

Belongs to the universal ribosomal protein uL15 family. As to quaternary structure, part of the 50S ribosomal subunit.

Functionally, binds to the 23S rRNA. This is Large ribosomal subunit protein uL15 from Mycoplasma capricolum subsp. capricolum (strain California kid / ATCC 27343 / NCTC 10154).